Here is a 475-residue protein sequence, read N- to C-terminus: Ataxin-10 (475 aa).

The residue at position 10 (Arg10) is an Omega-N-methylarginine. Residue Ser12 is modified to Phosphoserine; by AURKB. Ser77 is subject to Phosphoserine; by PLK1. The residue at position 82 (Thr82) is a Phosphothreonine; by PLK1. At Ser430 the chain carries Phosphoserine.

This sequence belongs to the ataxin-10 family. As to quaternary structure, homooligomer. Interacts with GNB2. Interacts with IQCB1. Interacts with OGT. Polyubiquitinated. Post-translationally, phosphorylation at Ser-12 by AURKB promotes the association of ATXN10 with PLK1. Phosphorylation at Ser-77 and Thr-82 by PLK1 may play a role in the regulation of cytokinesis and may stimulate the proteasome-mediated degradation of ATXN10. Expressed in the central nervous system.

The protein localises to the cytoplasm. Its subcellular location is the perinuclear region. It localises to the midbody. The protein resides in the cytoskeleton. It is found in the cilium basal body. The protein localises to the microtubule organizing center. Its subcellular location is the centrosome. It localises to the centriole. In terms of biological role, may play a role in the regulation of cytokinesis. May play a role in signaling by stimulating protein glycosylation. Induces neuritogenesis by activating the Ras-MAP kinase pathway and is necessary for the survival of cerebellar neurons. Does not appear to play a major role in ciliogenesis. The protein is Ataxin-10 (ATXN10) of Homo sapiens (Human).